The sequence spans 429 residues: Gamma-glutamyl phosphate reductase (429 aa).

It belongs to the gamma-glutamyl phosphate reductase family.

It is found in the cytoplasm. The catalysed reaction is L-glutamate 5-semialdehyde + phosphate + NADP(+) = L-glutamyl 5-phosphate + NADPH + H(+). It participates in amino-acid biosynthesis; L-proline biosynthesis; L-glutamate 5-semialdehyde from L-glutamate: step 2/2. Functionally, catalyzes the NADPH-dependent reduction of L-glutamate 5-phosphate into L-glutamate 5-semialdehyde and phosphate. The product spontaneously undergoes cyclization to form 1-pyrroline-5-carboxylate. In Sphingopyxis alaskensis (strain DSM 13593 / LMG 18877 / RB2256) (Sphingomonas alaskensis), this protein is Gamma-glutamyl phosphate reductase.